Reading from the N-terminus, the 169-residue chain is Transmembrane protein B169L (169 aa).

The next 2 membrane-spanning stretches (helical) occupy residues 28 to 48 (NPFI…FAIC) and 60 to 80 (TAIY…YVLN). Asparagine 88 carries N-linked (GlcNAc...) asparagine; by host glycosylation. The tract at residues 107–169 (DEIIPPISPP…EVIMPSQYNN (63 aa)) is disordered. Over residues 144–154 (SKPASSADSKP) the composition is skewed to low complexity.

The protein belongs to the asfivirus B169L family.

The protein localises to the host membrane. The protein resides in the virion. This chain is Transmembrane protein B169L, found in Ornithodoros (relapsing fever ticks).